The primary structure comprises 66 residues: Large ribosomal subunit protein uL29 (66 aa).

Belongs to the universal ribosomal protein uL29 family.

This chain is Large ribosomal subunit protein uL29, found in Thermotoga neapolitana (strain ATCC 49049 / DSM 4359 / NBRC 107923 / NS-E).